We begin with the raw amino-acid sequence, 245 residues long: uncharacterized protein (245 aa).

It to M.tuberculosis Rv2927c.

This is an uncharacterized protein from Mycobacterium leprae (strain TN).